Here is a 170-residue protein sequence, read N- to C-terminus: ATP synthase subunit b (170 aa).

Residues 22 to 41 form a helical membrane-spanning segment; that stretch reads ILNWAVVVFGLYKFLPGFLG. Residues 76–98 are disordered; the sequence is LSSAAEKASQIKADSLKRSESIR. Basic and acidic residues predominate over residues 89–98; that stretch reads DSLKRSESIR.

This sequence belongs to the ATPase B chain family. F-type ATPases have 2 components, F(1) - the catalytic core - and F(0) - the membrane proton channel. F(1) has five subunits: alpha(3), beta(3), gamma(1), delta(1), epsilon(1). F(0) has four main subunits: a(1), b(1), b'(1) and c(10-14). The alpha and beta chains form an alternating ring which encloses part of the gamma chain. F(1) is attached to F(0) by a central stalk formed by the gamma and epsilon chains, while a peripheral stalk is formed by the delta, b and b' chains.

Its subcellular location is the cellular thylakoid membrane. Its function is as follows. F(1)F(0) ATP synthase produces ATP from ADP in the presence of a proton or sodium gradient. F-type ATPases consist of two structural domains, F(1) containing the extramembraneous catalytic core and F(0) containing the membrane proton channel, linked together by a central stalk and a peripheral stalk. During catalysis, ATP synthesis in the catalytic domain of F(1) is coupled via a rotary mechanism of the central stalk subunits to proton translocation. Functionally, component of the F(0) channel, it forms part of the peripheral stalk, linking F(1) to F(0). The polypeptide is ATP synthase subunit b (Prochlorococcus marinus (strain AS9601)).